The following is a 132-amino-acid chain: Large ribosomal subunit protein uL14 (132 aa).

The protein belongs to the universal ribosomal protein uL14 family. Part of the 50S ribosomal subunit. Forms a cluster with proteins L3 and L24e, part of which may contact the 16S rRNA in 2 intersubunit bridges.

Its function is as follows. Binds to 23S rRNA. Forms part of two intersubunit bridges in the 70S ribosome. The protein is Large ribosomal subunit protein uL14 of Thermoplasma acidophilum (strain ATCC 25905 / DSM 1728 / JCM 9062 / NBRC 15155 / AMRC-C165).